The sequence spans 302 residues: N-acetyl-D-glucosamine kinase (302 aa).

ATP is bound by residues 4–11 (GFDVGGTK) and 133–140 (GFGGGLVY). Zn(2+) is bound by residues histidine 157, cysteine 177, cysteine 179, and cysteine 184.

The protein belongs to the ROK (NagC/XylR) family. NagK subfamily.

It carries out the reaction N-acetyl-D-glucosamine + ATP = N-acetyl-D-glucosamine 6-phosphate + ADP + H(+). It participates in cell wall biogenesis; peptidoglycan recycling. Catalyzes the phosphorylation of N-acetyl-D-glucosamine (GlcNAc) derived from cell-wall degradation, yielding GlcNAc-6-P. This Vibrio atlanticus (strain LGP32) (Vibrio splendidus (strain Mel32)) protein is N-acetyl-D-glucosamine kinase.